Here is a 539-residue protein sequence, read N- to C-terminus: Heparanase-like protein 2 (539 aa).

The first 21 residues, 1 to 21 (MGFNVVVFLSCLLLLPPVTFG), serve as a signal peptide directing secretion. 3 N-linked (GlcNAc...) asparagine glycosylation sites follow: asparagine 143, asparagine 163, and asparagine 181. Catalysis depends on glutamate 198, which acts as the Proton donor. A glycan (N-linked (GlcNAc...) asparagine) is linked at asparagine 300. Glutamate 316 functions as the Nucleophile in the catalytic mechanism. N-linked (GlcNAc...) asparagine glycosylation is present at asparagine 421.

It belongs to the glycosyl hydrolase 79 family.

The protein resides in the lysosome membrane. It is found in the secreted. Endoglycosidase which is a cell surface and extracellular matrix-degrading enzyme. Cleaves heparan sulfate proteoglycans (HSPGs) into heparan sulfate side chains and core proteoglycans. The polypeptide is Heparanase-like protein 2 (Arabidopsis thaliana (Mouse-ear cress)).